The chain runs to 69 residues: Magnetosome protein MamI (69 aa).

Topologically, residues 1 to 2 are cytoplasmic; sequence MP. Residues 3–23 form a helical membrane-spanning segment; it reads SVIFGLLALAIGLLGLTAWWW. Residues 24-31 are Lumenal-facing; that stretch reads SVTEFLRG. The chain crosses the membrane as a helical span at residues 32 to 52; the sequence is AVPVALIIFGLVALAAGVQSV. Residues 53 to 69 are Cytoplasmic-facing; that stretch reads RVPPAGKRANSDPNIDG.

The protein belongs to the magnetosome MamI protein family.

The protein resides in the magnetosome membrane. Its function is as follows. May be involved in an early stage of magnetosome nucleation. Not essential for formation of magnetosome membrane vesicles, it is probably functionally redundant with other proteins. May bind magnetite. One of 7 genes (mamLQBIEMO) able to induce magnetosome membrane biogenesis; coexpression of mamLQRBIEMO in a deletion of the 17 gene mamAB operon restores magnetosome vesicle formation but not magnetite biosynthesis. This is Magnetosome protein MamI from Magnetospirillum gryphiswaldense (strain DSM 6361 / JCM 21280 / NBRC 15271 / MSR-1).